A 190-amino-acid chain; its full sequence is Xanthine phosphoribosyltransferase 1 (190 aa).

Xanthine-binding residues include leucine 20 and asparagine 27. 128 to 132 (ANGEA) contributes to the 5-phospho-alpha-D-ribose 1-diphosphate binding site. Position 156 (lysine 156) interacts with xanthine.

It belongs to the purine/pyrimidine phosphoribosyltransferase family. Xpt subfamily. In terms of assembly, homodimer.

It is found in the cytoplasm. The enzyme catalyses XMP + diphosphate = xanthine + 5-phospho-alpha-D-ribose 1-diphosphate. Its pathway is purine metabolism; XMP biosynthesis via salvage pathway; XMP from xanthine: step 1/1. Its function is as follows. Converts the preformed base xanthine, a product of nucleic acid breakdown, to xanthosine 5'-monophosphate (XMP), so it can be reused for RNA or DNA synthesis. In Clostridium botulinum (strain ATCC 19397 / Type A), this protein is Xanthine phosphoribosyltransferase 1.